The sequence spans 355 residues: UDP-N-acetylglucosamine--N-acetylmuramyl-(pentapeptide) pyrophosphoryl-undecaprenol N-acetylglucosamine transferase (355 aa).

Residues 15–17 (TGG), Asn127, Arg163, Ser191, Ile244, 263–268 (ALTVSE), and Gln288 each bind UDP-N-acetyl-alpha-D-glucosamine.

Belongs to the glycosyltransferase 28 family. MurG subfamily.

Its subcellular location is the cell inner membrane. The enzyme catalyses di-trans,octa-cis-undecaprenyl diphospho-N-acetyl-alpha-D-muramoyl-L-alanyl-D-glutamyl-meso-2,6-diaminopimeloyl-D-alanyl-D-alanine + UDP-N-acetyl-alpha-D-glucosamine = di-trans,octa-cis-undecaprenyl diphospho-[N-acetyl-alpha-D-glucosaminyl-(1-&gt;4)]-N-acetyl-alpha-D-muramoyl-L-alanyl-D-glutamyl-meso-2,6-diaminopimeloyl-D-alanyl-D-alanine + UDP + H(+). It functions in the pathway cell wall biogenesis; peptidoglycan biosynthesis. Its function is as follows. Cell wall formation. Catalyzes the transfer of a GlcNAc subunit on undecaprenyl-pyrophosphoryl-MurNAc-pentapeptide (lipid intermediate I) to form undecaprenyl-pyrophosphoryl-MurNAc-(pentapeptide)GlcNAc (lipid intermediate II). The sequence is that of UDP-N-acetylglucosamine--N-acetylmuramyl-(pentapeptide) pyrophosphoryl-undecaprenol N-acetylglucosamine transferase from Salmonella paratyphi B (strain ATCC BAA-1250 / SPB7).